A 587-amino-acid chain; its full sequence is Arginine--tRNA ligase (587 aa).

The 'HIGH' region motif lies at 127-137; sequence PNLAKEMHVGH.

It belongs to the class-I aminoacyl-tRNA synthetase family. As to quaternary structure, monomer.

The protein localises to the cytoplasm. It carries out the reaction tRNA(Arg) + L-arginine + ATP = L-arginyl-tRNA(Arg) + AMP + diphosphate. The polypeptide is Arginine--tRNA ligase (Pseudomonas aeruginosa (strain LESB58)).